Reading from the N-terminus, the 207-residue chain is Ras-related protein Rab-7a (207 aa).

At Thr2 the chain carries N-acetylthreonine. Ser17, Gly18, Val19, Gly20, Lys21, Thr22, Ser23, Ser34, Asn35, Tyr37, and Thr40 together coordinate GTP. Thr22 provides a ligand contact to Mg(2+). Positions 28–41 match the Switch 1 motif; that stretch reads YVNKKFSNQYKATI. Thr40 and Asp63 together coordinate Mg(2+). A GTP-binding site is contributed by Gly66. The Switch 2 signature appears at 67 to 82; it reads QERFQSLGVAFYRGAD. Residue Ser72 is modified to Phosphoserine. Asn125, Lys126, Asp128, Ala156, and Lys157 together coordinate GTP. Residues Lys191 and Lys194 each participate in a glycyl lysine isopeptide (Lys-Gly) (interchain with G-Cter in ubiquitin) cross-link. S-geranylgeranyl cysteine attachment occurs at residues Cys205 and Cys207. Cys207 is modified (cysteine methyl ester).

This sequence belongs to the small GTPase superfamily. Rab family. Interacts with NTRK1/TRKA. Interacts with RILP. Interacts with PSMA7. Interacts with RNF115. Interacts with FYCO1. Interacts with the PIK3C3/VPS34-PIK3R4 complex. The GTP-bound form interacts with OSBPL1A. The GTP-bound form interacts with RAC1. Interacts with CLN3. Interacts with CHM, the substrate-binding subunit of the Rab geranylgeranyltransferase complex. Interacts with C9orf72. Does not interact with HPS4 and the BLOC-3 complex (heterodimer of HPS1 and HPS4). Interacts with CLN5. Interacts with PLEKHM1 (via N- and C-terminus). Interacts with PRPH; the interaction is direct. Interacts with VPS13A. The GDP-bound form interacts with RIMOC1. Interacts with the MON1A-CCZ1B complex and this interaction is enhanced in the presence of RIMOC1. Interacts with VPS39 and VPS41. Forms a ternary complex with LAMP2 and RUFY4; the interaction with LAMP2 is mediated by RUFY4 (via RUN and coiled coil domains). It depends on Mg(2+) as a cofactor. Post-translationally, deubiquitination at Lys-191 and Lys-194 by USP32. Phosphorylated at Ser-72 by LRRK1; phosphorylation is dependent on protein kinase C (PKC) activation of LRRK1. In terms of processing, prenylated. Prenylation is required for association with cellular membranes.

The protein localises to the cytoplasmic vesicle. The protein resides in the phagosome membrane. Its subcellular location is the late endosome membrane. It localises to the lysosome membrane. It is found in the melanosome membrane. The protein localises to the autophagosome membrane. The protein resides in the lipid droplet. Its subcellular location is the endosome membrane. It localises to the mitochondrion membrane. The enzyme catalyses GTP + H2O = GDP + phosphate + H(+). Regulated by guanine nucleotide exchange factors (GEFs) which promote the exchange of bound GDP for free GTP. Regulated by GTPase activating proteins (GAPs) which increase the GTP hydrolysis activity. Inhibited by GDP dissociation inhibitors (GDIs). In terms of biological role, the small GTPases Rab are key regulators of intracellular membrane trafficking, from the formation of transport vesicles to their fusion with membranes. Rabs cycle between an inactive GDP-bound form and an active GTP-bound form that is able to recruit to membranes different sets of downstream effectors directly responsible for vesicle formation, movement, tethering and fusion. In its active state, RAB7A binds to a variety of effector proteins playing a key role in the regulation of endo-lysosomal trafficking. Governs early-to-late endosomal maturation, microtubule minus-end as well as plus-end directed endosomal migration and positioning, and endosome-lysosome transport through different protein-protein interaction cascades. Also plays a central role in growth-factor-mediated cell signaling, nutrient-transporter-mediated nutrient uptake, neurotrophin transport in the axons of neurons and lipid metabolism. Also involved in regulation of some specialized endosomal membrane trafficking, such as maturation of melanosomes, pathogen-induced phagosomes (or vacuoles) and autophagosomes. Plays a role in the maturation and acidification of phagosomes that engulf pathogens, such as S.aureus and Mycobacteria. Plays a role in the fusion of phagosomes with lysosomes. In concert with RAC1, plays a role in regulating the formation of RBs (ruffled borders) in osteoclasts. Controls the endosomal trafficking and neurite outgrowth signaling of NTRK1/TRKA. Regulates the endocytic trafficking of the EGF-EGFR complex by regulating its lysosomal degradation. Involved in the ADRB2-stimulated lipolysis through lipophagy, a cytosolic lipase-independent autophagic pathway. Required for the exosomal release of SDCBP, CD63 and syndecan. Required for vesicular trafficking and cell surface expression of ACE2. May play a role in PRPH neuronal intermediate filament assembly. The protein is Ras-related protein Rab-7a (RAB7A) of Canis lupus familiaris (Dog).